A 188-amino-acid polypeptide reads, in one-letter code: Elongation factor P (188 aa).

This sequence belongs to the elongation factor P family.

It is found in the cytoplasm. It functions in the pathway protein biosynthesis; polypeptide chain elongation. Functionally, involved in peptide bond synthesis. Stimulates efficient translation and peptide-bond synthesis on native or reconstituted 70S ribosomes in vitro. Probably functions indirectly by altering the affinity of the ribosome for aminoacyl-tRNA, thus increasing their reactivity as acceptors for peptidyl transferase. The polypeptide is Elongation factor P (Stutzerimonas stutzeri (strain A1501) (Pseudomonas stutzeri)).